Here is a 457-residue protein sequence, read N- to C-terminus: Vasoactive intestinal polypeptide receptor 1 (457 aa).

Positions 1 to 30 (MRPPSPLPARWLCVLAGALAWALGPAGGQA) are cleaved as a signal peptide. The Extracellular portion of the chain corresponds to 31-141 (ARLQEECDYV…DEQQTMFYGS (111 aa)). 5 cysteine pairs are disulfide-bonded: C37/C208, C50/C72, C63/C105, C86/C122, and C215/C285. Residues N58, N69, and N100 are each glycosylated (N-linked (GlcNAc...) asparagine). The helical transmembrane segment at 142–166 (VKTGYTIGYGLSLATLLVATAILSL) threads the bilayer. Over 167–174 (FRKLHCTR) the chain is Cytoplasmic. A helical transmembrane segment spans residues 175–196 (NYIHMHLFISFILRAAAVFIKD). Topologically, residues 197 to 216 (LALFDSGESDQCSEGSVGCK) are extracellular. Residues 217 to 241 (AAMVFFQYCVMANFFWLLVEGLYLY) traverse the membrane as a helical segment. Topologically, residues 242–254 (TLLAVSFFSERKY) are cytoplasmic. The helical transmembrane segment at 255-276 (FWGYILIGWGVPSTFTMVWTIA) threads the bilayer. Residues 277 to 291 (RIHFEDYGCWDTINS) lie on the Extracellular side of the membrane. N290 carries an N-linked (GlcNAc...) asparagine glycan. Residues 292 to 316 (SLWWIIKGPILTSILVNFILFICII) traverse the membrane as a helical segment. At 317–338 (RILLQKLRPPDIRKSDSSPYSR) the chain is on the cytoplasmic side. A helical membrane pass occupies residues 339–359 (LARSTLLLIPLFGVHYIMFAF). Over 360–367 (FPDNFKPE) the chain is Extracellular. Residues 368-391 (VKMVFELVVGSFQGFVVAILYCFL) traverse the membrane as a helical segment. Residues 392-457 (NGEVQAELRR…SSFQAEVSLV (66 aa)) lie on the Cytoplasmic side of the membrane.

Belongs to the G-protein coupled receptor 2 family. In terms of assembly, interacts with ADCYAP1/PACAP; activated by both PACAP27 and PACAP38 neuropeptides. Interacts with VIP; the interaction results in VIPR1 activation. In lung, HT-29 colonic epithelial cells, Raji B-lymphoblasts. Lesser extent in brain, heart, kidney, liver and placenta. Not expressed in CD4+ or CD8+ T-cells. Expressed in the T-cell lines HARRIS, HuT 78, Jurkat and SUP-T1, but not in the T-cell lines Peer, MOLT-4, HSB and YT.

It localises to the cell membrane. In terms of biological role, g protein-coupled receptor activated by the neuropeptides vasoactive intestinal peptide (VIP) and pituitary adenylate cyclase-activating polypeptide (ADCYAP1/PACAP). Binds VIP and both PACAP27 and PACAP38 bioactive peptides with the following order of ligand affinity VIP = PACAP27 &gt; PACAP38. Ligand binding causes a conformation change that triggers signaling via guanine nucleotide-binding proteins (G proteins) and modulates the activity of downstream effectors. Activates cAMP-dependent pathway. This is Vasoactive intestinal polypeptide receptor 1 from Homo sapiens (Human).